We begin with the raw amino-acid sequence, 677 residues long: Glutamine--fructose-6-phosphate aminotransferase [isomerizing] 1 (677 aa).

The Nucleophile role is filled by C2. The region spanning 2-269 (CGIFAYLNFH…DGEVVNLKDG (268 aa)) is the Glutamine amidotransferase type-2 domain. SIS domains lie at 353 to 492 (HLKT…DTIS) and 524 to 667 (LAQL…VDQP). Substrate is bound by residues 370–371 (TS), 415–417 (SQS), T420, and H571.

In terms of assembly, homotetramer, may also exist as homodimers. Highly expressed in flowers specifically in mature anthers, mature pollen grains and pollen tubes. Barely observed in roots, leaves and stems.

The enzyme catalyses D-fructose 6-phosphate + L-glutamine = D-glucosamine 6-phosphate + L-glutamate. The protein operates within nucleotide-sugar biosynthesis; UDP-N-acetyl-alpha-D-glucosamine biosynthesis; alpha-D-glucosamine 6-phosphate from D-fructose 6-phosphate: step 1/1. Its function is as follows. Controls the flux of glucose into the hexosamine biosynthetic pathway (HBP) leading to glucosamine (GlcN) content homeostasis. Involved in regulating the availability of precursors for N- and O-linked glycosylation of proteins. Required during pollen maturation and pollen tube formation by triggering polar deposition of pectin and callose in the pollen cell wall. Promotes tolerance to tunicamycin (Tm), an inhibitor of proteins N-glycosylation in endoplasmic reticulum (ER). This is Glutamine--fructose-6-phosphate aminotransferase [isomerizing] 1 from Arabidopsis thaliana (Mouse-ear cress).